The sequence spans 655 residues: Probable replication factor A 73 kDa subunit (655 aa).

Residues 195 to 217 (NRAAAPEATRARAVPPPARRTAS) form a disordered region. Low complexity predominate over residues 196–207 (RAAAPEATRARA). Residues 236 to 326 (FKIHGMVSRK…TLRSDSIIEA (91 aa)) constitute a DNA-binding region (OB). The C4-type zinc finger occupies 518 to 539 (CASEGCQKKLVGENGDYRCEKC).

The protein belongs to the replication factor A protein 1 family. As to quaternary structure, component of the heterotrimeric canonical replication protein A complex (RPA).

The protein localises to the nucleus. As part of the heterotrimeric replication protein A complex (RPA/RP-A), binds and stabilizes single-stranded DNA intermediates, that form during DNA replication or upon DNA stress. It prevents their reannealing and in parallel, recruits and activates different proteins and complexes involved in DNA metabolism. Thereby, it plays an essential role both in DNA replication and the cellular response to DNA damage. This chain is Probable replication factor A 73 kDa subunit, found in Caenorhabditis elegans.